The chain runs to 30 residues: Cysteine-rich venom protein annuliferin-a (30 aa).

Belongs to the CRISP family. Contains 8 disulfide bonds. Expressed by the venom gland.

The protein resides in the secreted. Functionally, inhibits calcium-activated potassium channels (KCa), voltage-gated potassium channel (Kv), and the calcium release channel/ryanodine receptor (RyR). The sequence is that of Cysteine-rich venom protein annuliferin-a from Naja annulifera (Banded Egyptian cobra).